We begin with the raw amino-acid sequence, 252 residues long: Carboxymethylenebutenolidase (252 aa).

A disordered region spans residues 1 to 28; it reads MCHNKSSAPPTPAHISIQQNRTPGTDPV. Catalysis depends on residues Cys126, Asp183, and His214.

It belongs to the dienelactone hydrolase family.

The catalysed reaction is 2-(5-oxo-2,5-dihydrofuran-2-ylidene)acetate + H2O = 4-oxohex-2-enedioate + H(+). The protein operates within aromatic compound metabolism; 3-chlorocatechol degradation. Its function is as follows. Ring cleavage of cyclic ester dienelactone to produce maleylacetate. This Rhodococcus opacus (Nocardia opaca) protein is Carboxymethylenebutenolidase (clcD).